The chain runs to 963 residues: Putative RNA Helicase B962L (963 aa).

Residues 43–229 (IPTSLADRVL…FGIGKENIIL (187 aa)) enclose the Helicase ATP-binding domain. ATP is bound at residue 56 to 63 (SRTGSGKS). The short motif at 167 to 170 (DEAH) is the DEAH box element. One can recognise a Helicase C-terminal domain in the interval 253–459 (ACETALTIHK…TIKKNKEGVF (207 aa)). A helical transmembrane segment spans residues 521–541 (GYFWQAAISDIATILAVVSVV).

This sequence belongs to the DEAD box helicase family. DEAH subfamily.

The protein resides in the host membrane. It localises to the virion. The catalysed reaction is ATP + H2O = ADP + phosphate + H(+). This chain is Putative RNA Helicase B962L, found in Ornithodoros (relapsing fever ticks).